Here is a 445-residue protein sequence, read N- to C-terminus: Phosphoglucosamine mutase (445 aa).

Ser-102 functions as the Phosphoserine intermediate in the catalytic mechanism. Ser-102, Asp-241, Asp-243, and Asp-245 together coordinate Mg(2+). Residue Ser-102 is modified to Phosphoserine.

The protein belongs to the phosphohexose mutase family. It depends on Mg(2+) as a cofactor. Activated by phosphorylation.

It carries out the reaction alpha-D-glucosamine 1-phosphate = D-glucosamine 6-phosphate. Functionally, catalyzes the conversion of glucosamine-6-phosphate to glucosamine-1-phosphate. The chain is Phosphoglucosamine mutase from Shigella boydii serotype 4 (strain Sb227).